Consider the following 166-residue polypeptide: NADH-quinone oxidoreductase subunit A (166 aa).

A run of 3 helical transmembrane segments spans residues 16-36, 68-88, and 98-118; these read FAVF…GAYF, FYLV…LYAW, and IGFI…FYLV. The interval 141–166 is disordered; that stretch reads RYASSHPQDISQELSVAGSQQANESR.

This sequence belongs to the complex I subunit 3 family. In terms of assembly, NDH-1 is composed of 13 different subunits. Subunits NuoA, H, J, K, L, M, N constitute the membrane sector of the complex.

It localises to the cell inner membrane. It catalyses the reaction a quinone + NADH + 5 H(+)(in) = a quinol + NAD(+) + 4 H(+)(out). Its function is as follows. NDH-1 shuttles electrons from NADH, via FMN and iron-sulfur (Fe-S) centers, to quinones in the respiratory chain. The immediate electron acceptor for the enzyme in this species is believed to be ubiquinone. Couples the redox reaction to proton translocation (for every two electrons transferred, four hydrogen ions are translocated across the cytoplasmic membrane), and thus conserves the redox energy in a proton gradient. In Yersinia pseudotuberculosis serotype IB (strain PB1/+), this protein is NADH-quinone oxidoreductase subunit A.